The primary structure comprises 332 residues: CXADR-like membrane protein (332 aa).

A signal peptide spans 1–19 (MHTLIRSFLGLWYVLGALA). Ig-like C2-type domains lie at 20–123 (QTEI…SFIT) and 130–220 (PSEL…VDVT). At 20–231 (QTEIKLVADE…QSVSNTGILA (212 aa)) the chain is on the extracellular side. Disulfide bonds link Cys35–Cys109 and Cys151–Cys204. Asn193 is a glycosylation site (N-linked (GlcNAc...) asparagine). Residues 232–252 (GVACGVVVGVFLIFFTVWLLF) form a helical membrane-spanning segment. Over 253–332 (HKKEFKKREE…EQRHHCLEKI (80 aa)) the chain is Cytoplasmic. Residues 276–332 (PKARLVKPGSSSSDSRSSQSGSSSTRSTTNSASRSQRTHSTQETPHGEQRHHCLEKI) are disordered. Positions 285-310 (SSSSDSRSSQSGSSSTRSTTNSASRS) are enriched in low complexity. Residues 320–332 (PHGEQRHHCLEKI) show a composition bias toward basic and acidic residues.

It is found in the cell junction. Its subcellular location is the tight junction. The protein localises to the cell membrane. This is CXADR-like membrane protein (clmp) from Xenopus tropicalis (Western clawed frog).